The sequence spans 88 residues: Large ribosomal subunit protein bL27 (88 aa).

The tract at residues 1–22 (MAQKKAGGSSRNGRDSAGRRLG) is disordered.

It belongs to the bacterial ribosomal protein bL27 family.

This Gluconobacter oxydans (strain 621H) (Gluconobacter suboxydans) protein is Large ribosomal subunit protein bL27.